The following is a 402-amino-acid chain: Multidrug resistance protein MdtG (402 aa).

The next 11 helical transmembrane spans lie at 14–34 (LYIVWFGCFLTGAGFSLIMPF), 52–72 (LWTGVAFSITFLFSAIAAPFW), 90–110 (LGMAIVMVLIGFAQNIWQLLI), 113–133 (ALLGVLGGFVPNANALIATQV), 149–169 (AVSGALIGPLIGGILADLYGL), 171–191 (PVFFITAAVLFICFIVTLFFV), 219–239 (VICLFFTTMIIQVATGSVTPI), 254–274 (LAFISGVIASVPGIAALISAP), 288–308 (VLIFTLGLSIFMLIPMALVSN), 318–338 (LLGAVNAAMLPAVQTLILYNI), and 376–396 (AVFYFTAAVVFFNLIYSWISF).

The protein belongs to the major facilitator superfamily. DHA1 family. MdtG (TC 2.A.1.2.20) subfamily.

It localises to the cell inner membrane. The chain is Multidrug resistance protein MdtG from Proteus mirabilis (strain HI4320).